Reading from the N-terminus, the 296-residue chain is Iron(3+)-hydroxamate-binding protein FhuD (296 aa).

The tat-type signal signal peptide spans 1–30 (MSGLPLISRRRLLTAMALSPLLWQMNTAHA). Residues 37 to 296 (RIVALEWLPV…VLDNAIGGKA (260 aa)) form the Fe/B12 periplasmic-binding domain. Fe(III)-coprogen is bound by residues Trp-68, Arg-84, Ser-103, Tyr-106, Phe-124, Trp-217, Trp-273, Phe-274, and Tyr-275.

This sequence belongs to the bacterial solute-binding protein 8 family. The complex is composed of two ATP-binding proteins (FhuC), a transmembrane protein (FhuB) and a solute-binding protein (FhuD). FhuD interacts with FhuB. Substrate-loaded FhuD binds FhuB more strongly than FhuD alone. In terms of processing, exported by the Tat system. The position of the signal peptide cleavage has been experimentally proven. Can also be exported by the Sec system.

It localises to the periplasm. Functionally, part of the ABC transporter complex FhuCDB involved in iron(3+)-hydroxamate import. Binds the iron(3+)-hydroxamate complex and transfers it to the membrane-bound permease. Required for the transport of all iron(3+)-hydroxamate siderophores such as ferrichrome, gallichrome, desferrioxamine, coprogen, aerobactin, shizokinen, rhodotorulic acid and the antibiotic albomycin. The chain is Iron(3+)-hydroxamate-binding protein FhuD (fhuD) from Escherichia coli (strain K12).